Here is a 1015-residue protein sequence, read N- to C-terminus: Frequency clock protein (1015 aa).

Disordered regions lie at residues 1–138 (MQPT…SADD), 183–285 (KRKK…QKVD), 352–383 (DFSPQQQQQQQQQQQQQPKSNFITNPGATFSS), 402–465 (HVAG…DPDR), 544–614 (GRKI…VSAS), 629–668 (SPNEQSSMEDGTLSSFGPIEESNADSRWGQSGSGASNRRK), 706–728 (ERPDAQGQFARPLPFRSGSGSSI), and 895–1015 (SEDD…SSQG). Residues 49 to 68 (SAPPNDSNENSSSPRRASSG) are compositionally biased toward low complexity. A compositionally biased stretch (basic and acidic residues) spans 69 to 80 (ESHETGQSDAKK). Residues 82–95 (FNQSNQNPTATFDS) are compositionally biased toward polar residues. The span at 107–117 (KESDSSNEDKP) shows a compositional bias: basic and acidic residues. Low complexity-rich tracts occupy residues 203-216 (SPNTSSSKRNSTTK), 228-267 (SGSGSKSQSKHASSSSGSHTRPVDSAYASMSTGAGSSGTS), and 356-368 (QQQQQQQQQQQQQ). Residues 369-383 (PKSNFITNPGATFSS) show a composition bias toward polar residues. Over residues 431 to 442 (NSSSNGNDSGTN) the composition is skewed to low complexity. Positions 443-453 (PSPPMPPPPEQ) are enriched in pro residues. Positions 454–465 (RPTRPRDLDPDR) are enriched in basic and acidic residues. Positions 556–570 (TKFSSESSGDLSQRS) are enriched in polar residues. The Nuclear localization signal signature appears at 584–588 (HKRQK). Residues 590–600 (GHSTGDSGSSG) show a composition bias toward low complexity. The span at 629–643 (SPNEQSSMEDGTLSS) shows a compositional bias: polar residues. Composition is skewed to acidic residues over residues 895 to 909 (SEDDFGSDGDDEFNS) and 934 to 946 (SGDEDGEEPEDDI). The span at 976-1003 (GSSRGRSNSASAEAVLRAGGSSAATAGG) shows a compositional bias: low complexity.

This sequence belongs to the FRQ family.

The protein resides in the nucleus. Circadian clock component involved in the generation of biological rhythms, in particular in rhythm stability, period length, and temperature compensation. Behaves as a negative element in circadian transcriptional loop. This is Frequency clock protein (FRQ) from Trichoderma spinulosum (Hypocrea spinulosa).